The chain runs to 272 residues: Prohibitin 1 (272 aa).

Position 2 is an N-acetylalanine (Ala2). Position 91 is a phosphothreonine (Thr91). An N6-acetyllysine mark is found at Lys128 and Lys186. Residues Lys177 to Ile211 adopt a coiled-coil conformation. Lys202 is subject to N6-acetyllysine; alternate. Residue Lys202 is modified to N6-succinyllysine; alternate. The residue at position 249 (Tyr249) is a Phosphotyrosine.

Belongs to the prohibitin family. In terms of assembly, the mitochondrial prohibitin complex consists of two subunits (PHB1 and PHB2), assembled into a membrane-associated ring-shaped supercomplex of approximately 1 mDa. Interacts with STOML2. Interacts with MAP1LC3B (membrane-bound form LC3-II); the interaction requires PHB2 and takes place upon Parkin-mediated mitochondrial damage. Interacts with STAT3 (unphosphorylated or phosphorylated at 'Ser-727'). Interacts with CLPB. Interacts with CD86 (via cytoplasmic domain); the interactions increases after priming with CD40.

It localises to the mitochondrion inner membrane. Its subcellular location is the nucleus. The protein resides in the cytoplasm. The protein localises to the cell membrane. Protein with pleiotropic attributes mediated in a cell-compartment- and tissue-specific manner, which include the plasma membrane-associated cell signaling functions, mitochondrial chaperone, and transcriptional co-regulator of transcription factors in the nucleus. Plays a role in adipose tissue and glucose homeostasis in a sex-specific manner. Contributes to pulmonary vascular remodeling by accelerating proliferation of pulmonary arterial smooth muscle cells. Its function is as follows. In the mitochondria, together with PHB2, forms large ring complexes (prohibitin complexes) in the inner mitochondrial membrane (IMM) and functions as a chaperone protein that stabilizes mitochondrial respiratory enzymes and maintains mitochondrial integrity in the IMM, which is required for mitochondrial morphogenesis, neuronal survival, and normal lifespan. The prohibitin complex, with DNAJC19, regulates cardiolipin remodeling and the protein turnover of OMA1 in a cardiolipin-binding manner. Regulates mitochondrial respiration activity playing a role in cellular aging. The prohibitin complex plays a role of mitophagy receptor involved in targeting mitochondria for autophagic degradation. Involved in mitochondrial-mediated antiviral innate immunity, activates RIG-I-mediated signal transduction and production of IFNB1 and proinflammatory cytokine IL6. Functionally, in the nucleus, acts as a transcription coregulator, enhances promoter binding by TP53, a transcription factor it activates, but reduces the promoter binding by E2F1, a transcription factor it represses. Interacts with STAT3 to affect IL17 secretion in T-helper Th17 cells. In terms of biological role, in the plasma membrane, cooperates with CD86 to mediate CD86-signaling in B lymphocytes that regulates the level of IgG1 produced through the activation of distal signaling intermediates. Upon CD40 engagement, required to activate NF-kappa-B signaling pathway via phospholipase C and protein kinase C activation. This Bos taurus (Bovine) protein is Prohibitin 1 (PHB1).